A 243-amino-acid polypeptide reads, in one-letter code: PF03932 family protein CutC (243 aa).

The protein belongs to the CutC family.

It localises to the cytoplasm. The sequence is that of PF03932 family protein CutC from Parabacteroides distasonis (strain ATCC 8503 / DSM 20701 / CIP 104284 / JCM 5825 / NCTC 11152).